We begin with the raw amino-acid sequence, 412 residues long: Stachydrine N-demethylase (412 aa).

Positions leucine 45–isoleucine 150 constitute a Rieske domain. Residues cysteine 86, histidine 88, cysteine 106, and histidine 109 each contribute to the [2Fe-2S] cluster site. Positions 204, 209, and 360 each coordinate Fe cation.

Belongs to the bacterial ring-hydroxylating dioxygenase alpha subunit family. In terms of assembly, homotrimer. The system is probably composed of an oxygenase subunit (Stc2) and two reductase subunits (Stc3 and Stc4). The cofactor is [2Fe-2S] cluster. It depends on Fe cation as a cofactor.

It carries out the reaction L-proline betaine + NADH + O2 + H(+) = N-methyl-L-proline + formaldehyde + NAD(+) + H2O. The catalysed reaction is L-proline betaine + NADPH + O2 + H(+) = N-methyl-L-proline + formaldehyde + NADP(+) + H2O. In terms of biological role, monooxygenase involved in the catabolism of stachydrine (L-proline betaine), a source of carbon and nitrogen. Part of a Rieske-type oxygenase system that catalyzes the demethylation of stachydrine to produce N-methyl-L-proline (monomethylproline). Stc2 is the catalytic subunit. The chain is Stachydrine N-demethylase from Rhizobium meliloti (strain 1021) (Ensifer meliloti).